A 108-amino-acid chain; its full sequence is Nucleoid-associated protein Bphyt_1827 (108 aa).

The segment at 87–108 is disordered; that stretch reads AQEKMGGMTSGLPLPPGFKLPF. Residues 99-108 show a composition bias toward pro residues; the sequence is PLPPGFKLPF.

This sequence belongs to the YbaB/EbfC family. Homodimer.

Its subcellular location is the cytoplasm. The protein localises to the nucleoid. Binds to DNA and alters its conformation. May be involved in regulation of gene expression, nucleoid organization and DNA protection. In Paraburkholderia phytofirmans (strain DSM 17436 / LMG 22146 / PsJN) (Burkholderia phytofirmans), this protein is Nucleoid-associated protein Bphyt_1827.